A 147-amino-acid polypeptide reads, in one-letter code: UPF0179 protein MTH_609 (147 aa).

Belongs to the UPF0179 family.

This chain is UPF0179 protein MTH_609, found in Methanothermobacter thermautotrophicus (strain ATCC 29096 / DSM 1053 / JCM 10044 / NBRC 100330 / Delta H) (Methanobacterium thermoautotrophicum).